The primary structure comprises 324 residues: Homeobox protein Nkx-2.5 (324 aa).

Positions 138–197 (RRKPRVLFSQAQVYELERRFKQQRYLSAPERDQLASVLKLTSTQVKIWFQNRRYKCKRQR) form a DNA-binding region, homeobox.

The protein belongs to the NK-2 homeobox family. Homodimer (via the homeobox); binds DNA as homodimer. Interacts (via the homeobox) with TBX5 (via the T-box); this complex binds DNA. Interacts with HIPK1 and HIPK2, but not HIPK3. Interacts with the C-terminal zinc finger of GATA4 through its homeobox domain. Also interacts with JARID2 which represses its ability to activate transcription of ANF. Interacts with FBLIM1. Interacts with TBX18. Interacts with histone methyltransferase NSD2 (via HMG box). Interacts with NEDD9. Interacts with TBX1. Expressed only in the heart.

It localises to the nucleus. Its function is as follows. Transcription factor required for the development of the heart and the spleen. During heart development, acts as a transcriptional activator of NPPA/ANF in cooperation with GATA4. May cooperate with TBX2 to negatively modulate expression of NPPA/ANF in the atrioventricular canal. Binds to the core DNA motif of NPPA promoter. Together with PBX1, required for spleen development through a mechanism that involves CDKN2B repression. Positively regulates transcription of genes such as COL3A1 and MMP2, resulting in increased pulmonary endothelial fibrosis in response to hypoxia. The chain is Homeobox protein Nkx-2.5 (NKX2-5) from Homo sapiens (Human).